We begin with the raw amino-acid sequence, 488 residues long: 3-octaprenyl-4-hydroxybenzoate carboxy-lyase (488 aa).

Residue Asn-172 participates in Mn(2+) binding. Prenylated FMN-binding positions include 175 to 177 (IYR), 189 to 191 (RWL), and 194 to 195 (RG). Glu-238 contacts Mn(2+). Asp-287 (proton donor) is an active-site residue.

Belongs to the UbiD family. In terms of assembly, homohexamer. Prenylated FMN serves as cofactor. Requires Mn(2+) as cofactor.

It is found in the cell membrane. The enzyme catalyses a 4-hydroxy-3-(all-trans-polyprenyl)benzoate + H(+) = a 2-(all-trans-polyprenyl)phenol + CO2. It functions in the pathway cofactor biosynthesis; ubiquinone biosynthesis. Functionally, catalyzes the decarboxylation of 3-octaprenyl-4-hydroxy benzoate to 2-octaprenylphenol, an intermediate step in ubiquinone biosynthesis. This chain is 3-octaprenyl-4-hydroxybenzoate carboxy-lyase, found in Pseudomonas paraeruginosa (strain DSM 24068 / PA7) (Pseudomonas aeruginosa (strain PA7)).